Here is a 215-residue protein sequence, read N- to C-terminus: Putative O-methyltransferase MAB_1361c (215 aa).

Residues Val42, Glu64, 66–67, Ser72, Asp90, and Val91 each bind S-adenosyl-L-methionine; that span reads GT. Asp138 serves as a coordination point for substrate.

This sequence belongs to the class I-like SAM-binding methyltransferase superfamily. Cation-dependent O-methyltransferase family.

The polypeptide is Putative O-methyltransferase MAB_1361c (Mycobacteroides abscessus (strain ATCC 19977 / DSM 44196 / CCUG 20993 / CIP 104536 / JCM 13569 / NCTC 13031 / TMC 1543 / L948) (Mycobacterium abscessus)).